The following is a 277-amino-acid chain: F41 fimbrial protein (277 aa).

Positions 1–22 (MKKTLIALAVAASAAVSGSVMA) are cleaved as a signal peptide.

Belongs to the fimbrial K88 protein family.

It localises to the fimbrium. Its function is as follows. Fimbriae (also called pili), polar filaments radiating from the surface of the bacterium to a length of 0.5-1.5 micrometers and numbering 100-300 per cell, enable bacteria to colonize the epithelium of specific host organs. In Escherichia coli, this protein is F41 fimbrial protein (FimF41a).